The chain runs to 262 residues: uncharacterized protein (262 aa).

The 211-residue stretch at 1-211 (MAFHVMIIPS…LLYLLDSYLE (211 aa)) folds into the Radical SAM core domain. Residues C13, C17, and C20 each contribute to the [4Fe-4S] cluster site.

This sequence belongs to the radical SAM superfamily. Anaerobic sulfatase-maturating enzyme family. The cofactor is [4Fe-4S] cluster.

This is an uncharacterized protein from Methanothermobacter thermautotrophicus (strain ATCC 29096 / DSM 1053 / JCM 10044 / NBRC 100330 / Delta H) (Methanobacterium thermoautotrophicum).